The sequence spans 231 residues: PX domain-containing protein 1 (231 aa).

Residues 1 to 134 enclose the PX domain; that stretch reads MASAVFEGTS…TFFERSPLDQ (134 aa).

The chain is PX domain-containing protein 1 (PXDC1) from Homo sapiens (Human).